The following is a 561-amino-acid chain: Hemolysin transporter protein HpmB (561 aa).

Positions 1 to 17 (MKKKVVLLTLLSCFSTS) are cleaved as a signal peptide. The 74-residue stretch at 77-150 (LPIKGVYIQG…GELGLYAIEG (74 aa)) folds into the POTRA domain.

Belongs to the TPS (TC 1.B.20) family.

The protein localises to the cell outer membrane. Interacts with the cell-bound hemolysin. Necessary for the extracellular secretion and activation of the hemolysin. Functionally, probable member of a two partner secretion pathway (TPS) in which it mediates the secretion of hemolysin. This chain is Hemolysin transporter protein HpmB (hpmB), found in Proteus mirabilis.